We begin with the raw amino-acid sequence, 460 residues long: CCA-adding enzyme (460 aa).

ATP-binding residues include serine 50 and arginine 53. Positions 50 and 53 each coordinate CTP. Mg(2+)-binding residues include aspartate 62, aspartate 64, and aspartate 117. ATP is bound by residues histidine 140, lysine 159, and tyrosine 168. 3 residues coordinate CTP: histidine 140, lysine 159, and tyrosine 168.

This sequence belongs to the tRNA nucleotidyltransferase/poly(A) polymerase family. Archaeal CCA-adding enzyme subfamily. Homodimer. The cofactor is Mg(2+).

The enzyme catalyses a tRNA precursor + 2 CTP + ATP = a tRNA with a 3' CCA end + 3 diphosphate. It catalyses the reaction a tRNA with a 3' CCA end + 2 CTP + ATP = a tRNA with a 3' CCACCA end + 3 diphosphate. In terms of biological role, catalyzes the addition and repair of the essential 3'-terminal CCA sequence in tRNAs without using a nucleic acid template. Adds these three nucleotides in the order of C, C, and A to the tRNA nucleotide-73, using CTP and ATP as substrates and producing inorganic pyrophosphate. tRNA 3'-terminal CCA addition is required both for tRNA processing and repair. Also involved in tRNA surveillance by mediating tandem CCA addition to generate a CCACCA at the 3' terminus of unstable tRNAs. While stable tRNAs receive only 3'-terminal CCA, unstable tRNAs are marked with CCACCA and rapidly degraded. The polypeptide is CCA-adding enzyme (Methanoregula boonei (strain DSM 21154 / JCM 14090 / 6A8)).